Reading from the N-terminus, the 276-residue chain is MEQEDDKQYSREAVFAGRRVSVVGSDARSRGRVPGYASSSLYRESGIISARQLALLQRMLPRLRLEQLFRCEWLQQRLARGLALGREEVRQILLCAAQDDDGWCSELGDRVNLAVPQSMIDWVLLPVYGWWESLLDQAIPGWRLSLVELETQSRQLRVKSEFWSRVAELEPEQAREELARVAKCQARTQEQVAELAGKLETASALAKSAWPNWQRGMATLLASGGLAGFEPIPEVLECLWQPLCRLDDDVGAADAVQAWLHERNLCQAQDHFYWQS.

As to quaternary structure, can form homotrimer. Interacts with ExsA; this interaction inhibits ExsA activity. Interacts with ExsC; this interaction dissociates the ExsD-ExsA complex.

Negative regulator of the type III secretion system regulon. Acts by disrupting transcriptional activator ExsA self-association and DNA-binding activity in absence of inducing signals. Upon host cell contact, this interaction is disrupted by the anti-antiactivator protein ExsC leading to ExsA activation. This is Transcriptional antiactivator ExsD (exsD) from Pseudomonas aeruginosa (strain ATCC 15692 / DSM 22644 / CIP 104116 / JCM 14847 / LMG 12228 / 1C / PRS 101 / PAO1).